We begin with the raw amino-acid sequence, 121 residues long: Small ribosomal subunit protein uS13 (121 aa).

The segment at 91 to 121 (HRMSLPVRGQRTRTNARTRRGSRKTVAGRKK) is disordered. The segment covering 100-121 (QRTRTNARTRRGSRKTVAGRKK) has biased composition (basic residues).

Belongs to the universal ribosomal protein uS13 family. As to quaternary structure, part of the 30S ribosomal subunit. Forms a loose heterodimer with protein S19. Forms two bridges to the 50S subunit in the 70S ribosome.

Located at the top of the head of the 30S subunit, it contacts several helices of the 16S rRNA. In the 70S ribosome it contacts the 23S rRNA (bridge B1a) and protein L5 of the 50S subunit (bridge B1b), connecting the 2 subunits; these bridges are implicated in subunit movement. Contacts the tRNAs in the A and P-sites. The chain is Small ribosomal subunit protein uS13 from Prochlorococcus marinus (strain MIT 9312).